Reading from the N-terminus, the 171-residue chain is Cytochrome c oxidase subunit 5, mitochondrial (171 aa).

A mitochondrion-targeting transit peptide spans 1 to 27; the sequence is MLRTPTVSALVRNVAVRAAKPTMAVRA. At 28–100 the chain is on the mitochondrial matrix side; sequence ASTMPISNPT…ALPPPGEQKK (73 aa). The chain crosses the membrane as a helical span at residues 101-123; it reads VLAYTVAGVFLSFVIFATMRAFA. The Mitochondrial intermembrane segment spans residues 124 to 171; that stretch reads KPPPATMTKEWQEATNEFLKAQKSDPLTGLTSEGYNGKGHVQSPSASA. Residues 145–171 are disordered; sequence QKSDPLTGLTSEGYNGKGHVQSPSASA.

It belongs to the cytochrome c oxidase IV family. Component of the cytochrome c oxidase (complex IV, CIV), a multisubunit enzyme composed of 11 subunits. The complex is composed of a catalytic core of 3 subunits Cox1, Cox2 and Cox3, encoded in the mitochondrial DNA, and 8 supernumerary subunits Cox4, Cox5a/Cox5, Cox6, Cox7, Cox8, Cox7a/Cox9, Cox6b/Cox12 and Cox6a/Cox13, which are encoded in the nuclear genome. The complex exists as a monomer or a dimer and forms respiratory supercomplexes (SCs) in the inner mitochondrial membrane with NADH-ubiquinone oxidoreductase (complex I, CI) and ubiquinol-cytochrome c oxidoreductase (cytochrome b-c1 complex, complex III, CIII), resulting in various different assemblies (supercomplexes I(1)IV(1), I(1)III(3)IV(2), III(2)IV(1) and III(2)IV(2) as well as larger supercomplexes of compositions like I(1)III(2)IV(5-6)).

It localises to the mitochondrion inner membrane. It functions in the pathway energy metabolism; oxidative phosphorylation. Component of the cytochrome c oxidase, the last enzyme in the mitochondrial electron transport chain which drives oxidative phosphorylation. The respiratory chain contains 3 multisubunit complexes succinate dehydrogenase (complex II, CII), ubiquinol-cytochrome c oxidoreductase (cytochrome b-c1 complex, complex III, CIII) and cytochrome c oxidase (complex IV, CIV), that cooperate to transfer electrons derived from NADH and succinate to molecular oxygen, creating an electrochemical gradient over the inner membrane that drives transmembrane transport and the ATP synthase. Cytochrome c oxidase is the component of the respiratory chain that catalyzes the reduction of oxygen to water. Electrons originating from reduced cytochrome c in the intermembrane space (IMS) are transferred via the dinuclear copper A center (CU(A)) of Cox2 and heme A of Cox1 to the active site in Cox1, a binuclear center (BNC) formed by heme A3 and copper B (CU(B)). The BNC reduces molecular oxygen to 2 water molecules using 4 electrons from cytochrome c in the IMS and 4 protons from the mitochondrial matrix. This is Cytochrome c oxidase subunit 5, mitochondrial (cya-4) from Neurospora crassa (strain ATCC 24698 / 74-OR23-1A / CBS 708.71 / DSM 1257 / FGSC 987).